The sequence spans 461 residues: tRNA modification GTPase MnmE (461 aa).

Residues Arg27, Glu89, and Arg128 each contribute to the (6S)-5-formyl-5,6,7,8-tetrahydrofolate site. The TrmE-type G domain maps to 224–382 (GLATAIVGRP…LENAIEQLFF (159 aa)). Asn234 lines the K(+) pocket. Residues 234–239 (NVGKSS), 253–259 (TDIAGTT), and 278–281 (DTAG) contribute to the GTP site. Residue Ser238 participates in Mg(2+) binding. K(+) is bound by residues Thr253, Ile255, and Thr258. Residue Thr259 participates in Mg(2+) binding. Lys461 provides a ligand contact to (6S)-5-formyl-5,6,7,8-tetrahydrofolate.

This sequence belongs to the TRAFAC class TrmE-Era-EngA-EngB-Septin-like GTPase superfamily. TrmE GTPase family. As to quaternary structure, homodimer. Heterotetramer of two MnmE and two MnmG subunits. K(+) is required as a cofactor.

It is found in the cytoplasm. Exhibits a very high intrinsic GTPase hydrolysis rate. Involved in the addition of a carboxymethylaminomethyl (cmnm) group at the wobble position (U34) of certain tRNAs, forming tRNA-cmnm(5)s(2)U34. The sequence is that of tRNA modification GTPase MnmE from Lactobacillus johnsonii (strain CNCM I-12250 / La1 / NCC 533).